The primary structure comprises 429 residues: MEWEEIYKEKLVTAEKAVSKIENHSRVVFAHAVGEPVDLVNALVKNKDNYIGLEIVHMVAMGKGEYTKEGMQRHFRHNALFVGGCTRDAVNSGRADYTPCFFYEVPSLFKEKRLPVDVALIQVSEPDKYGYCSFGVSNDYTKPAAESAKLVIAEVNKNMPRTLGDSFIHVSDIDYIVEASHPLLELQPPKLGDVEKAIGENCASLIEDGATLQLGIGAIPDAVLLFLKNKKNLGIHSEMISDGVMELVKAGVINNKKKTLHPGKIVVTFLMGTKKLYDFVNNNPMVETYSVDYVNNPLVIMKNDNMVSINSCVQVDLMGQVCSESIGLKQISGVGGQVDFIRGANLSKGGKAIIAIPSTAGKGKVSRITPLLDTGAAVTTSRNEVDYVVTEYGVAHLKGKTLRNRARALINIAHPKFRESLMNEFKKRF.

215-219 contacts CoA; the sequence is GIGAI. E238 functions as the 5-glutamyl coenzyme A thioester intermediate in the catalytic mechanism. G336 is a CoA binding site.

It belongs to the acetyl-CoA hydrolase/transferase family.

The protein is 4-hydroxybutyrate coenzyme A transferase (cat2) of Clostridium kluyveri (strain ATCC 8527 / DSM 555 / NBRC 12016 / NCIMB 10680 / K1).